Here is a 303-residue protein sequence, read N- to C-terminus: Nitrogenase iron protein (303 aa).

An ATP-binding site is contributed by 11-18 (GKGGIGKS). Residue cysteine 112 participates in [4Fe-4S] cluster binding. Arginine 115 is modified (ADP-ribosylarginine; by dinitrogenase reductase ADP-ribosyltransferase). Cysteine 147 is a binding site for [4Fe-4S] cluster.

The protein belongs to the NifH/BchL/ChlL family. In terms of assembly, homodimer. Requires [4Fe-4S] cluster as cofactor. The reversible ADP-ribosylation of Arg-115 inactivates the nitrogenase reductase and regulates nitrogenase activity.

It catalyses the reaction N2 + 8 reduced [2Fe-2S]-[ferredoxin] + 16 ATP + 16 H2O = H2 + 8 oxidized [2Fe-2S]-[ferredoxin] + 2 NH4(+) + 16 ADP + 16 phosphate + 6 H(+). Its function is as follows. The key enzymatic reactions in nitrogen fixation are catalyzed by the nitrogenase complex, which has 2 components: the iron protein and the molybdenum-iron protein. This Wolinella succinogenes (strain ATCC 29543 / DSM 1740 / CCUG 13145 / JCM 31913 / LMG 7466 / NCTC 11488 / FDC 602W) (Vibrio succinogenes) protein is Nitrogenase iron protein.